We begin with the raw amino-acid sequence, 191 residues long: GDP-mannose pyrophosphatase (191 aa).

GDP-alpha-D-mannose-binding positions include Tyr17, 38 to 40, Arg67, and 85 to 87; these read KRE and AGL. The Nudix hydrolase domain occupies 43 to 180; sequence DRGNGATILL…EIRDGKTVLL (138 aa). Ala85, Glu100, and Glu104 together coordinate Mg(2+). Positions 86–106 match the Nudix box motif; sequence GLLDNDEPEVCIRKEAIEETG. GDP-alpha-D-mannose contacts are provided by residues Glu104, Glu127, 150–151, and Lys176; that span reads DE. Glu151 serves as a coordination point for Mg(2+).

The protein belongs to the Nudix hydrolase family. NudK subfamily. As to quaternary structure, homodimer. It depends on Mg(2+) as a cofactor.

The enzyme catalyses GDP-alpha-D-mannose + H2O = alpha-D-mannose 1-phosphate + GMP + 2 H(+). Its function is as follows. Nucleoside diphosphate sugar hydrolase that hydrolyzes GDP-mannose as its preferred substrate, yielding GMP and mannose-1-phosphate. In Salmonella arizonae (strain ATCC BAA-731 / CDC346-86 / RSK2980), this protein is GDP-mannose pyrophosphatase (nudK).